The primary structure comprises 576 residues: Phosphoenolpyruvate-protein phosphotransferase (576 aa).

His-189 serves as the catalytic Tele-phosphohistidine intermediate. Phosphoenolpyruvate is bound by residues Arg-296 and Arg-332. The Mg(2+) site is built by Glu-431 and Asp-455. Residues 454-455 (ND) and Arg-465 contribute to the phosphoenolpyruvate site. Cys-502 functions as the Proton donor in the catalytic mechanism.

Belongs to the PEP-utilizing enzyme family. As to quaternary structure, homodimer. Mg(2+) serves as cofactor.

The protein resides in the cytoplasm. It carries out the reaction L-histidyl-[protein] + phosphoenolpyruvate = N(pros)-phospho-L-histidyl-[protein] + pyruvate. Functionally, general (non sugar-specific) component of the phosphoenolpyruvate-dependent sugar phosphotransferase system (sugar PTS). This major carbohydrate active-transport system catalyzes the phosphorylation of incoming sugar substrates concomitantly with their translocation across the cell membrane. Enzyme I transfers the phosphoryl group from phosphoenolpyruvate (PEP) to the phosphoryl carrier protein (HPr). The protein is Phosphoenolpyruvate-protein phosphotransferase (ptsI) of Buchnera aphidicola subsp. Baizongia pistaciae (strain Bp).